The primary structure comprises 191 residues: Glycerol-3-phosphate acyltransferase (191 aa).

The next 5 membrane-spanning stretches (helical) occupy residues 5-25, 50-70, 78-98, 112-132, and 153-173; these read IVFV…ITKI, CIAA…VYIA, SFHM…PVWL, ILIA…LAVF, and SFFF…LIFF.

It belongs to the PlsY family. In terms of assembly, probably interacts with PlsX.

It localises to the cell membrane. The catalysed reaction is an acyl phosphate + sn-glycerol 3-phosphate = a 1-acyl-sn-glycero-3-phosphate + phosphate. The protein operates within lipid metabolism; phospholipid metabolism. Catalyzes the transfer of an acyl group from acyl-phosphate (acyl-PO(4)) to glycerol-3-phosphate (G3P) to form lysophosphatidic acid (LPA). This enzyme utilizes acyl-phosphate as fatty acyl donor, but not acyl-CoA or acyl-ACP. The protein is Glycerol-3-phosphate acyltransferase of Wolbachia sp. subsp. Brugia malayi (strain TRS).